Here is a 782-residue protein sequence, read N- to C-terminus: Endonuclease MutS2 (782 aa).

Position 336–343 (336–343) interacts with ATP; the sequence is GPNTGGKT. Residues 707–782 enclose the Smr domain; it reads LDLRGYRYED…GFGVTVATLK (76 aa).

Belongs to the DNA mismatch repair MutS family. MutS2 subfamily. In terms of assembly, homodimer. Binds to stalled ribosomes, contacting rRNA.

Functionally, endonuclease that is involved in the suppression of homologous recombination and thus may have a key role in the control of bacterial genetic diversity. In terms of biological role, acts as a ribosome collision sensor, splitting the ribosome into its 2 subunits. Detects stalled/collided 70S ribosomes which it binds and splits by an ATP-hydrolysis driven conformational change. Acts upstream of the ribosome quality control system (RQC), a ribosome-associated complex that mediates the extraction of incompletely synthesized nascent chains from stalled ribosomes and their subsequent degradation. Probably generates substrates for RQC. The polypeptide is Endonuclease MutS2 (Staphylococcus aureus (strain COL)).